A 190-amino-acid polypeptide reads, in one-letter code: MKLIVGLGNPESRYIGTRHNIGFSAVEKIAASFGANFSKGKGKSLEAKITHRGEQVIIIKPMTYMNLSGHAVVAAMNFYKIVRNDILIICDDLNLPSGTIRLRAKGSAGGQNGLKHIIESLGSEEFARLRIGIRVDETSLTSFSSFVLGKFSENEKVVMEKILPITSDAALDFTINGIEHAMNNYNKPVT.

Residue Tyr14 coordinates tRNA. Catalysis depends on His19, which acts as the Proton acceptor. Residues Tyr64, Asn66, and Asn112 each contribute to the tRNA site.

The protein belongs to the PTH family. In terms of assembly, monomer.

The protein localises to the cytoplasm. The enzyme catalyses an N-acyl-L-alpha-aminoacyl-tRNA + H2O = an N-acyl-L-amino acid + a tRNA + H(+). In terms of biological role, hydrolyzes ribosome-free peptidyl-tRNAs (with 1 or more amino acids incorporated), which drop off the ribosome during protein synthesis, or as a result of ribosome stalling. Its function is as follows. Catalyzes the release of premature peptidyl moieties from peptidyl-tRNA molecules trapped in stalled 50S ribosomal subunits, and thus maintains levels of free tRNAs and 50S ribosomes. The chain is Peptidyl-tRNA hydrolase from Pelodictyon phaeoclathratiforme (strain DSM 5477 / BU-1).